Here is a 593-residue protein sequence, read N- to C-terminus: Mono(ADP-ribosyl)transferase SpvB (593 aa).

Residues 361–384 are disordered; sequence PVNNMMPPPPPPPPPMMGGNSSRP. Residues 366–376 show a composition bias toward pro residues; it reads MPPPPPPPPPM. In terms of domain architecture, TR mART core spans 375–578; sequence PMMGGNSSRP…LRLSDDATAD (204 aa). Catalysis depends on residues Arg-473, Ser-503, and Glu-540.

This sequence belongs to the SpvB family.

The protein localises to the secreted. The enzyme catalyses L-arginyl-[protein] + NAD(+) = N(omega)-(ADP-D-ribosyl)-L-arginyl-[protein] + nicotinamide + H(+). In terms of biological role, mono-ADP-ribosylates muscle and non-muscle actin. ADP-ribosylates Chinese hamster ovary and HeLa cell actin as well as rabbit muscle, porcine heart actin and non-muscle beta- and gamma-actin. ADP-ribosylation of actin prevents the polymerization of G actin to F actin, causing actin filament depolymerization, destruction of the cytoskeleton and cytotoxicity; this requires only the C-terminal 120 residues. Does not possess NAD(+)-glycohydrolase activity, unlike most mART enzymes. The protein is Mono(ADP-ribosyl)transferase SpvB (spvB) of Salmonella dublin.